Here is a 496-residue protein sequence, read N- to C-terminus: Glutamate--tRNA ligase (496 aa).

The 'HIGH' region motif lies at 12-22; the sequence is PSPTGHLHIGN. A 'KMSKS' region motif is present at residues 259-263; that stretch reads KLSKR. Lys-262 is an ATP binding site.

Belongs to the class-I aminoacyl-tRNA synthetase family. Glutamate--tRNA ligase type 1 subfamily. As to quaternary structure, monomer.

Its subcellular location is the cytoplasm. The catalysed reaction is tRNA(Glu) + L-glutamate + ATP = L-glutamyl-tRNA(Glu) + AMP + diphosphate. Functionally, catalyzes the attachment of glutamate to tRNA(Glu) in a two-step reaction: glutamate is first activated by ATP to form Glu-AMP and then transferred to the acceptor end of tRNA(Glu). The polypeptide is Glutamate--tRNA ligase (Lactiplantibacillus plantarum (strain ATCC BAA-793 / NCIMB 8826 / WCFS1) (Lactobacillus plantarum)).